Reading from the N-terminus, the 410-residue chain is Arginine biosynthesis bifunctional protein ArgJ (410 aa).

Residues T160, K186, T197, E283, N405, and T410 each coordinate substrate. Catalysis depends on T197, which acts as the Nucleophile.

It belongs to the ArgJ family. As to quaternary structure, heterotetramer of two alpha and two beta chains.

The protein localises to the cytoplasm. It carries out the reaction N(2)-acetyl-L-ornithine + L-glutamate = N-acetyl-L-glutamate + L-ornithine. The catalysed reaction is L-glutamate + acetyl-CoA = N-acetyl-L-glutamate + CoA + H(+). It participates in amino-acid biosynthesis; L-arginine biosynthesis; L-ornithine and N-acetyl-L-glutamate from L-glutamate and N(2)-acetyl-L-ornithine (cyclic): step 1/1. It functions in the pathway amino-acid biosynthesis; L-arginine biosynthesis; N(2)-acetyl-L-ornithine from L-glutamate: step 1/4. Functionally, catalyzes two activities which are involved in the cyclic version of arginine biosynthesis: the synthesis of N-acetylglutamate from glutamate and acetyl-CoA as the acetyl donor, and of ornithine by transacetylation between N(2)-acetylornithine and glutamate. The polypeptide is Arginine biosynthesis bifunctional protein ArgJ (Geobacillus kaustophilus (strain HTA426)).